A 149-amino-acid chain; its full sequence is Large ribosomal subunit protein uL24 (149 aa).

The protein belongs to the universal ribosomal protein uL24 family. Part of the 50S ribosomal subunit.

Its function is as follows. One of two assembly initiator proteins, it binds directly to the 5'-end of the 23S rRNA, where it nucleates assembly of the 50S subunit. Functionally, located at the polypeptide exit tunnel on the outside of the subunit. The sequence is that of Large ribosomal subunit protein uL24 from Hyperthermus butylicus (strain DSM 5456 / JCM 9403 / PLM1-5).